The following is a 601-amino-acid chain: ATP-dependent lipid A-core flippase (601 aa).

Helical transmembrane passes span 26–46 (VGLF…QPML), 82–102 (LMIV…NYFL), 167–187 (VFLF…MVAI), and 263–283 (VYTP…LFLV). One can recognise an ABC transmembrane type-1 domain in the interval 30–321 (AVSILGYVIF…LSEVSSTIQR (292 aa)). The region spanning 353 to 589 (IEVRDLSFRY…GGHYARLHAM (237 aa)) is the ABC transporter domain. Residue 387-394 (GRSGSGKS) participates in ATP binding.

The protein belongs to the ABC transporter superfamily. Lipid exporter (TC 3.A.1.106) family. Homodimer.

Its subcellular location is the cell inner membrane. It carries out the reaction ATP + H2O + lipid A-core oligosaccharideSide 1 = ADP + phosphate + lipid A-core oligosaccharideSide 2.. Functionally, involved in lipopolysaccharide (LPS) biosynthesis. Translocates lipid A-core from the inner to the outer leaflet of the inner membrane. Transmembrane domains (TMD) form a pore in the inner membrane and the ATP-binding domain (NBD) is responsible for energy generation. In Aromatoleum aromaticum (strain DSM 19018 / LMG 30748 / EbN1) (Azoarcus sp. (strain EbN1)), this protein is ATP-dependent lipid A-core flippase.